Here is a 294-residue protein sequence, read N- to C-terminus: Cell division control protein 2 homolog 2 (294 aa).

The region spanning 4-287 is the Protein kinase domain; sequence YEKVEKIGEG…ARGALEHEYF (284 aa). ATP-binding positions include 10-18 and lysine 33; that span reads IGEGTYGVV. Threonine 14 is modified (phosphothreonine). Tyrosine 15 is modified (phosphotyrosine). Aspartate 127 functions as the Proton acceptor in the catalytic mechanism. Phosphothreonine; by CAK is present on threonine 161.

The protein belongs to the protein kinase superfamily. CMGC Ser/Thr protein kinase family. CDC2/CDKX subfamily. Found in most organs including root, young leaf, stem, vegetative meristem and flower bud.

The catalysed reaction is L-seryl-[protein] + ATP = O-phospho-L-seryl-[protein] + ADP + H(+). The enzyme catalyses L-threonyl-[protein] + ATP = O-phospho-L-threonyl-[protein] + ADP + H(+). Its activity is regulated as follows. Phosphorylation at Thr-14 or Tyr-15 inactivates the enzyme, while phosphorylation at Thr-161 activates it. Plays a key role in the control of the eukaryotic cell cycle. Component of the kinase complex that phosphorylates the repetitive C-terminus of RNA polymerase II. This chain is Cell division control protein 2 homolog 2 (CDC2B), found in Medicago sativa (Alfalfa).